Here is a 77-residue protein sequence, read N- to C-terminus: Surfactant-associated protein 2 (77 aa).

The N-terminal stretch at 1–19 (MESLMRLFLLLALLSSSHA) is a signal peptide. The N-linked (GlcNAc...) asparagine glycan is linked to Asn-61.

Post-translationally, N-glycosylated. In terms of tissue distribution, expressed in lung, and specifically in alveolar type II epithelial cells.

It is found in the secreted. The protein localises to the cytoplasmic vesicle. It localises to the secretory vesicle. Its subcellular location is the golgi apparatus. Putative surfactant protein. In Mus musculus (Mouse), this protein is Surfactant-associated protein 2.